Here is a 29-residue protein sequence, read N- to C-terminus: Histone H2B (29 aa).

Positions methionine 1–lysine 29 are disordered. N6-acetyllysine is present on residues lysine 6 and lysine 11. Residue serine 13 is modified to Phosphoserine. Residues glycine 20–lysine 29 are compositionally biased toward basic residues.

The protein belongs to the histone H2B family. As to quaternary structure, the nucleosome is a histone octamer containing two molecules each of H2A, H2B, H3 and H4 assembled in one H3-H4 heterotetramer and two H2A-H2B heterodimers. The octamer wraps approximately 147 bp of DNA. Post-translationally, monoubiquitination at the C-terminal Lys gives a specific tag for epigenetic transcriptional activation and is also prerequisite for histone H3 'Lys-4' and 'Lys-79' methylation. In terms of processing, phosphorylated during apoptosis; which facilitates apoptotic chromatin condensation.

The protein localises to the nucleus. Its subcellular location is the chromosome. Functionally, core component of nucleosome. Nucleosomes wrap and compact DNA into chromatin, limiting DNA accessibility to the cellular machineries which require DNA as a template. Histones thereby play a central role in transcription regulation, DNA repair, DNA replication and chromosomal stability. DNA accessibility is regulated via a complex set of post-translational modifications of histones, also called histone code, and nucleosome remodeling. The protein is Histone H2B of Cyprinus carpio (Common carp).